Consider the following 604-residue polypeptide: Aspartate--tRNA(Asp/Asn) ligase (604 aa).

Glutamate 169 lines the L-aspartate pocket. The aspartate stretch occupies residues glutamine 193–lysine 196. L-aspartate is bound at residue arginine 215. ATP-binding positions include arginine 215–glutamate 217 and glutamine 224. Histidine 456 is a binding site for L-aspartate. Residue glutamate 490 participates in ATP binding. Arginine 497 provides a ligand contact to L-aspartate. ATP is bound at residue glycine 542–arginine 545. Residues proline 571–alanine 604 form a disordered region.

It belongs to the class-II aminoacyl-tRNA synthetase family. Type 1 subfamily. Homodimer.

It localises to the cytoplasm. It carries out the reaction tRNA(Asx) + L-aspartate + ATP = L-aspartyl-tRNA(Asx) + AMP + diphosphate. Aspartyl-tRNA synthetase with relaxed tRNA specificity since it is able to aspartylate not only its cognate tRNA(Asp) but also tRNA(Asn). Reaction proceeds in two steps: L-aspartate is first activated by ATP to form Asp-AMP and then transferred to the acceptor end of tRNA(Asp/Asn). In Micrococcus luteus (strain ATCC 4698 / DSM 20030 / JCM 1464 / CCM 169 / CCUG 5858 / IAM 1056 / NBRC 3333 / NCIMB 9278 / NCTC 2665 / VKM Ac-2230) (Micrococcus lysodeikticus), this protein is Aspartate--tRNA(Asp/Asn) ligase.